The sequence spans 146 residues: Hut operon positive regulatory protein (146 aa).

This sequence belongs to the HutP family. Homohexamer.

Its function is as follows. Antiterminator that binds to cis-acting regulatory sequences on the mRNA in the presence of histidine, thereby suppressing transcription termination and activating the hut operon for histidine utilization. The protein is Hut operon positive regulatory protein of Bacillus cereus (strain G9842).